We begin with the raw amino-acid sequence, 103 residues long: Large ribosomal subunit protein bL21 (103 aa).

This sequence belongs to the bacterial ribosomal protein bL21 family. In terms of assembly, part of the 50S ribosomal subunit. Contacts protein L20.

Its function is as follows. This protein binds to 23S rRNA in the presence of protein L20. This Shewanella denitrificans (strain OS217 / ATCC BAA-1090 / DSM 15013) protein is Large ribosomal subunit protein bL21.